The sequence spans 260 residues: Small ribosomal subunit protein uS3 (260 aa).

Positions 39-114 (LRQYIEQKLG…QIRINVVEVQ (76 aa)) constitute a KH type-2 domain. The disordered stretch occupies residues 217 to 260 (GQEPDPLPPASRDRERDPRDRDREPRRRQQQRRRQQFEDRSNEG). Composition is skewed to basic and acidic residues over residues 227–243 (SRDRERDPRDRDREPRR) and 251–260 (QQFEDRSNEG).

The protein belongs to the universal ribosomal protein uS3 family. Part of the 30S ribosomal subunit. Forms a tight complex with proteins S10 and S14.

In terms of biological role, binds the lower part of the 30S subunit head. Binds mRNA in the 70S ribosome, positioning it for translation. The chain is Small ribosomal subunit protein uS3 from Nostoc punctiforme (strain ATCC 29133 / PCC 73102).